The chain runs to 434 residues: MNITFIGSGYVGLVSGIIMGYLGHNVTCLDNDDVKISKLNKKILPIYEAKLDEYLKHALESDRLKFTNIYSNEFRNFDAIFITVGTPSKELGEADLKYVYDAVDKVSKHINKDCLIVIKSTVPPGSCNNIIAYLKAKGFSFNVASNPEFLREGSAVEDFLYPDRIVVGVNNKESEALLRKIYAPLIEQGAKFLVTNLVTSELIKYVSNSFLATKIAFINEMADLCEKIGANIKDLSQGVGLDQRIGRNFLNAGPGFGGSCFPKDILALNNLVENHKIDCKILKSVIKSNKLRPSNMVAKIATLLDGDLKGRNIAILGLTYKAGTDDVRASPAIEIITILLNKDVYVKAFDPIGLENAKKNLEHKNLLYFASAVEACKSVDIIVIATEWSEFKELNWQEIYNLVKSPMIIDLRNILDNEVMKKIGFRYYAVGSQI.

Residues Asn2 to Met19, Val11, Asp30, Lys35, Thr121, and Glu152 contribute to the NAD(+) site. Substrate contacts are provided by residues Glu148–Glu152, Lys204, Asn208, Phe249–Gly253, and Gly257. Cys260 (nucleophile) is an active-site residue. Lys263 is an NAD(+) binding site. Substrate is bound at residue Lys321. Arg328 is a binding site for NAD(+).

It belongs to the UDP-glucose/GDP-mannose dehydrogenase family.

It catalyses the reaction UDP-alpha-D-glucose + 2 NAD(+) + H2O = UDP-alpha-D-glucuronate + 2 NADH + 3 H(+). It functions in the pathway nucleotide-sugar biosynthesis; UDP-alpha-D-glucuronate biosynthesis; UDP-alpha-D-glucuronate from UDP-alpha-D-glucose: step 1/1. The chain is UDP-glucose 6-dehydrogenase (udg) from Rickettsia prowazekii (strain Madrid E).